A 199-amino-acid chain; its full sequence is NADH-quinone oxidoreductase subunit C (199 aa).

Belongs to the complex I 30 kDa subunit family. NDH-1 is composed of 14 different subunits. Subunits NuoB, C, D, E, F, and G constitute the peripheral sector of the complex.

It localises to the cell inner membrane. The enzyme catalyses a quinone + NADH + 5 H(+)(in) = a quinol + NAD(+) + 4 H(+)(out). Functionally, NDH-1 shuttles electrons from NADH, via FMN and iron-sulfur (Fe-S) centers, to quinones in the respiratory chain. The immediate electron acceptor for the enzyme in this species is believed to be ubiquinone. Couples the redox reaction to proton translocation (for every two electrons transferred, four hydrogen ions are translocated across the cytoplasmic membrane), and thus conserves the redox energy in a proton gradient. The sequence is that of NADH-quinone oxidoreductase subunit C from Roseobacter denitrificans (strain ATCC 33942 / OCh 114) (Erythrobacter sp. (strain OCh 114)).